Here is a 292-residue protein sequence, read N- to C-terminus: NAD kinase (292 aa).

D73 functions as the Proton acceptor in the catalytic mechanism. Residues 73–74, 147–148, H158, R175, D177, 188–193, and Q248 each bind NAD(+); these read DG, NE, and TGYSLS.

It belongs to the NAD kinase family. A divalent metal cation serves as cofactor.

It is found in the cytoplasm. It carries out the reaction NAD(+) + ATP = ADP + NADP(+) + H(+). Functionally, involved in the regulation of the intracellular balance of NAD and NADP, and is a key enzyme in the biosynthesis of NADP. Catalyzes specifically the phosphorylation on 2'-hydroxyl of the adenosine moiety of NAD to yield NADP. This Buchnera aphidicola subsp. Baizongia pistaciae (strain Bp) protein is NAD kinase.